The sequence spans 134 residues: Holo-[acyl-carrier-protein] synthase (134 aa).

Mg(2+)-binding residues include D8 and E57.

Belongs to the P-Pant transferase superfamily. AcpS family. Requires Mg(2+) as cofactor.

The protein resides in the cytoplasm. It catalyses the reaction apo-[ACP] + CoA = holo-[ACP] + adenosine 3',5'-bisphosphate + H(+). Its function is as follows. Transfers the 4'-phosphopantetheine moiety from coenzyme A to a Ser of acyl-carrier-protein. The sequence is that of Holo-[acyl-carrier-protein] synthase from Roseobacter denitrificans (strain ATCC 33942 / OCh 114) (Erythrobacter sp. (strain OCh 114)).